A 278-amino-acid polypeptide reads, in one-letter code: 3-methyl-2-oxobutanoate hydroxymethyltransferase (278 aa).

Mg(2+)-binding residues include aspartate 43 and aspartate 82. 3-methyl-2-oxobutanoate contacts are provided by residues 43 to 44 (DS), aspartate 82, and lysine 112. Glutamate 114 serves as a coordination point for Mg(2+). Glutamate 181 acts as the Proton acceptor in catalysis.

This sequence belongs to the PanB family. As to quaternary structure, homodecamer; pentamer of dimers. Mg(2+) serves as cofactor.

The protein localises to the cytoplasm. It carries out the reaction 3-methyl-2-oxobutanoate + (6R)-5,10-methylene-5,6,7,8-tetrahydrofolate + H2O = 2-dehydropantoate + (6S)-5,6,7,8-tetrahydrofolate. It functions in the pathway cofactor biosynthesis; (R)-pantothenate biosynthesis; (R)-pantoate from 3-methyl-2-oxobutanoate: step 1/2. Its function is as follows. Catalyzes the reversible reaction in which hydroxymethyl group from 5,10-methylenetetrahydrofolate is transferred onto alpha-ketoisovalerate to form ketopantoate. The chain is 3-methyl-2-oxobutanoate hydroxymethyltransferase from Desulfitobacterium hafniense (strain DSM 10664 / DCB-2).